The sequence spans 263 residues: Type III pantothenate kinase (263 aa).

6–13 (DVGNTNIK) contacts ATP. 108 to 111 (GSDR) is a substrate binding site. The active-site Proton acceptor is aspartate 110. Aspartate 131 contacts K(+). Threonine 134 contributes to the ATP binding site. Threonine 187 contacts substrate.

This sequence belongs to the type III pantothenate kinase family. In terms of assembly, homodimer. NH4(+) serves as cofactor. It depends on K(+) as a cofactor.

It is found in the cytoplasm. It carries out the reaction (R)-pantothenate + ATP = (R)-4'-phosphopantothenate + ADP + H(+). It participates in cofactor biosynthesis; coenzyme A biosynthesis; CoA from (R)-pantothenate: step 1/5. Its function is as follows. Catalyzes the phosphorylation of pantothenate (Pan), the first step in CoA biosynthesis. This is Type III pantothenate kinase from Anaplasma phagocytophilum (strain HZ).